Consider the following 210-residue polypeptide: 3-hexulose-6-phosphate synthase 1 (210 aa).

It belongs to the HPS/KGPDC family. HPS subfamily.

The catalysed reaction is D-ribulose 5-phosphate + formaldehyde = D-arabino-hex-3-ulose 6-phosphate. Its pathway is one-carbon metabolism; formaldehyde assimilation via RuMP pathway; D-fructose 6-phosphate from D-ribulose 5-phosphate and formaldehyde: step 1/2. Catalyzes the condensation of ribulose 5-phosphate with formaldehyde to form 3-hexulose 6-phosphate. The sequence is that of 3-hexulose-6-phosphate synthase 1 from Staphylococcus saprophyticus subsp. saprophyticus (strain ATCC 15305 / DSM 20229 / NCIMB 8711 / NCTC 7292 / S-41).